Here is a 514-residue protein sequence, read N- to C-terminus: 2,3-bisphosphoglycerate-independent phosphoglycerate mutase (514 aa).

Residues D12 and S62 each contribute to the Mn(2+) site. S62 (phosphoserine intermediate) is an active-site residue. Substrate is bound by residues H123, 153 to 154 (RD), R185, R191, 260 to 263 (RPDR), and K335. The Mn(2+) site is built by D402, H406, D443, H444, and H462.

It belongs to the BPG-independent phosphoglycerate mutase family. As to quaternary structure, monomer. Mn(2+) is required as a cofactor.

The catalysed reaction is (2R)-2-phosphoglycerate = (2R)-3-phosphoglycerate. It participates in carbohydrate degradation; glycolysis; pyruvate from D-glyceraldehyde 3-phosphate: step 3/5. In terms of biological role, catalyzes the interconversion of 2-phosphoglycerate and 3-phosphoglycerate. The protein is 2,3-bisphosphoglycerate-independent phosphoglycerate mutase of Lachnoclostridium phytofermentans (strain ATCC 700394 / DSM 18823 / ISDg) (Clostridium phytofermentans).